An 847-amino-acid polypeptide reads, in one-letter code: Phenylalanine--tRNA ligase beta subunit (847 aa).

One can recognise a tRNA-binding domain in the interval 40-168 (FGIEGPVVVG…LDPEVGADAV (129 aa)). Residues 426–501 (ADAEPIRLPD…RIVGFDRIPS (76 aa)) form the B5 domain. Mg(2+) contacts are provided by aspartate 479, aspartate 485, glutamate 488, and glutamate 489. The 94-residue stretch at 753–846 (AGFPAATQDL…AGQLFGAAIR (94 aa)) folds into the FDX-ACB domain.

Belongs to the phenylalanyl-tRNA synthetase beta subunit family. Type 1 subfamily. Tetramer of two alpha and two beta subunits. Mg(2+) is required as a cofactor.

It localises to the cytoplasm. It catalyses the reaction tRNA(Phe) + L-phenylalanine + ATP = L-phenylalanyl-tRNA(Phe) + AMP + diphosphate + H(+). This is Phenylalanine--tRNA ligase beta subunit from Leifsonia xyli subsp. xyli (strain CTCB07).